The sequence spans 1218 residues: Cytosolic carboxypeptidase 1 (1218 aa).

Disordered stretches follow at residues 476 to 512 (VVMK…RVAP) and 590 to 617 (TEDD…PTLH). The segment covering 477–499 (VMKERASPKGEEAKEDPKGHDRT) has biased composition (basic and acidic residues). One can recognise a Peptidase M14 domain in the interval 840–1130 (YPYTYSTLQM…KFCVGLLRLK (291 aa)). Residues His912, Glu915, and His1009 each coordinate Zn(2+). Glu1094 acts as the Proton donor/acceptor in catalysis. Position 1160 is a phosphoserine (Ser1160). The interval 1193–1218 (ENTGDYEPSAQEEALSDSEVSRTHLI) is disordered.

Belongs to the peptidase M14 family. As to quaternary structure, interacts with MYLK. It depends on Zn(2+) as a cofactor. In terms of tissue distribution, widely expressed. Highly expressed in the cerebellum and cortex of adult mouse brain. Expressed at similar levels in both the cerebellum and the cortex throughout all developmental stages. Also expressed in sciatic nerve transection, spinal motor neurons undergoing axon regeneration, testis, heart, eye, lung, pancreas, intestine, stomach, pituitary, spleen, adrenal, kidney and in developing brain. Expression in cranial motor nuclei is the same as that observed in uninjured primary motor neurons. Expression is prevalent in sensory neurons and hippocampal CA3 neurons in addition to regenerating motor neurons.

It localises to the cytoplasm. The protein resides in the cytosol. It is found in the nucleus. The protein localises to the mitochondrion. The catalysed reaction is (L-glutamyl)(n+1)-gamma-L-glutamyl-L-glutamyl-[protein] + H2O = (L-glutamyl)(n)-gamma-L-glutamyl-L-glutamyl-[protein] + L-glutamate. It catalyses the reaction C-terminal L-alpha-aminoacyl-L-glutamyl-L-glutamyl-[tubulin] + H2O = C-terminal L-alpha-aminoacyl-L-glutamyl-[tubulin] + L-glutamate. Its function is as follows. Metallocarboxypeptidase that mediates protein deglutamylation of tubulin and non-tubulin target proteins. Catalyzes the removal of polyglutamate side chains present on the gamma-carboxyl group of glutamate residues within the C-terminal tail of alpha- and beta-tubulin. Specifically cleaves tubulin long-side-chains, while it is not able to remove the branching point glutamate. Also catalyzes the removal of polyglutamate residues from the carboxy-terminus of alpha-tubulin as well as non-tubulin proteins such as MYLK. Involved in KLF4 deglutamylation which promotes KLF4 proteasome-mediated degradation, thereby negatively regulating cell pluripotency maintenance and embryogenesis. This Mus musculus (Mouse) protein is Cytosolic carboxypeptidase 1.